The chain runs to 702 residues: Pseudouridylate synthase PUS7L (702 aa).

Ser79 is modified (phosphoserine). The interval 84-116 (NSEGAADLPGCSDGDRSHQSDSEKENSVNSVTS) is disordered. The span at 96 to 109 (DGDRSHQSDSEKEN) shows a compositional bias: basic and acidic residues. Asp339 serves as the catalytic Nucleophile. A TRUD domain is found at 424 to 646 (GFVNYYGPQR…PGCYRHIVKH (223 aa)).

It belongs to the pseudouridine synthase TruD family.

The catalysed reaction is a uridine in mRNA = a pseudouridine in mRNA. Functionally, pseudouridine synthase that catalyzes pseudouridylation of mRNAs. This is Pseudouridylate synthase PUS7L from Mus musculus (Mouse).